The following is a 388-amino-acid chain: Flap endonuclease 1 (388 aa).

Residues 1-104 (MGILGLSKLI…GELAKRAERR (104 aa)) form an N-domain region. Aspartate 34 contacts Mg(2+). The DNA site is built by arginine 47 and arginine 70. Mg(2+) is bound by residues aspartate 86, glutamate 158, glutamate 160, aspartate 179, and aspartate 181. The tract at residues 122–253 (QIEKFNRRLV…KRAIELIKSY (132 aa)) is I-domain. Glutamate 158 is a DNA binding site. DNA-binding residues include glycine 231 and aspartate 233. Aspartate 233 contributes to the Mg(2+) binding site. The segment at 336-344 (TQVRLDSFF) is interaction with PCNA. The disordered stretch occupies residues 355 to 388 (AAAKRKAEESKKSANSKKAKIGGGSGAGRGRRPK).

The protein belongs to the XPG/RAD2 endonuclease family. FEN1 subfamily. In terms of assembly, interacts with PCNA. Three molecules of FEN1 bind to one PCNA trimer with each molecule binding to one PCNA monomer. PCNA stimulates the nuclease activity without altering cleavage specificity. Mg(2+) is required as a cofactor. Post-translationally, phosphorylated. Phosphorylation upon DNA damage induces relocalization to the nuclear plasma.

The protein resides in the nucleus. It is found in the nucleolus. Its subcellular location is the nucleoplasm. The protein localises to the mitochondrion. Functionally, structure-specific nuclease with 5'-flap endonuclease and 5'-3' exonuclease activities involved in DNA replication and repair. During DNA replication, cleaves the 5'-overhanging flap structure that is generated by displacement synthesis when DNA polymerase encounters the 5'-end of a downstream Okazaki fragment. It enters the flap from the 5'-end and then tracks to cleave the flap base, leaving a nick for ligation. Also involved in the long patch base excision repair (LP-BER) pathway, by cleaving within the apurinic/apyrimidinic (AP) site-terminated flap. Acts as a genome stabilization factor that prevents flaps from equilibrating into structures that lead to duplications and deletions. Also possesses 5'-3' exonuclease activity on nicked or gapped double-stranded DNA, and exhibits RNase H activity. Also involved in replication and repair of rDNA and in repairing mitochondrial DNA. The polypeptide is Flap endonuclease 1 (Drosophila grimshawi (Hawaiian fruit fly)).